We begin with the raw amino-acid sequence, 1048 residues long: MEEKPFPAWSWSVDQCLKEYQVKLEKGLSTYEVDKRRERYGLNELEKEKGKPLWRLVLEQFDDTLVKILLGAAFISFVLAYVNQDETGESGFEAYVEPLVILWILVLNAIVGVWQESNAEKALEALKEMQGESAKVLRDGYLVPDFPAKELVPGDIVELRVGDKVPADMRVATLKSSTLRVEQSSLTGESMPVTKSTDFLATDDCELQAKENMVFAGTTVVNGSCICIVVNTGMCTEIGKIQRQIHDASMEESDTPLKKKLDEFGNRLTFAIGVVCLVVWAINYKYFLSWEVVDDWPSDFRFSFEKCAYYFKIAVALAVAAIPEGLPSVITTCLALGTRKMAQKNAIVRKLQSVETLGCTTVICSDKTGTLTTNQMSVSEFFTLGRKTTACRVFGVEGTTYDPKDGGIMNWNCCKMDANLLLMAEICAICNDAGVFCDGRLFKATGLPTEAALKVLVEKMGVPDSKARCKIRDAQIVSSYLIDRNTVKLGCCDWWMKRSKRVATLEFDRVRKSMGVIVREPNGSNRLLVKGAFESLLERSTYVQLADGSTVPLDESCRQLLLLKQLEMSSKGLRCLGLAYKDDLGELSGYYAATHPAHKKLLDPSCYSSIESDLVFVGVVGLRDPPREEVHRAVNDCRRAGIKIMVITGDNKSTAEAVCREIQLFSNGENLRGSSFTGKEFMAFSSQQQIEILSQDGGKVFSRAEPRHKQEIVRMLKEMGEIVAMTGDGVNDAPALKLADIGIAMGITGTEVAKEASDMVLADDNFSTIVSAVAEGRSIYNNMKAFIRYMISSNVGEVISIFLTAVLGIPECLIPVQLLWVNLVTDGPPATALGFNPADVDIMQKPPRKNTDALINSWVFFRYMVIGSYVGIATVGIFIVWYTQASFLGINIVSDGHTLVELSQLRNWGECSTWTNFTVSPFKAGNRLITFSDPCEYFTVGKVKAMTLSLSVLVAIEMFNSLNALSEDNSLIKMPPWRNPWLLVAMSLSFALHSVILYVPFLADIFGIVPLSLYEWLLVILLSAPVILIDEVLKFVGRRRRRTKLKAA.

Residues 1 to 63 (MEEKPFPAWS…WRLVLEQFDD (63 aa)) lie on the Cytoplasmic side of the membrane. The chain crosses the membrane as a helical span at residues 64–84 (TLVKILLGAAFISFVLAYVNQ). Residues 85–93 (DETGESGFE) are Lumenal-facing. A helical membrane pass occupies residues 94–114 (AYVEPLVILWILVLNAIVGVW). The Cytoplasmic segment spans residues 115–213 (QESNAEKALE…DCELQAKENM (99 aa)). A helical transmembrane segment spans residues 214–234 (VFAGTTVVNGSCICIVVNTGM). Over 235-267 (CTEIGKIQRQIHDASMEESDTPLKKKLDEFGNR) the chain is Lumenal. The helical transmembrane segment at 268-288 (LTFAIGVVCLVVWAINYKYFL) threads the bilayer. Residues 289-312 (SWEVVDDWPSDFRFSFEKCAYYFK) are Cytoplasmic-facing. The helical transmembrane segment at 313–333 (IAVALAVAAIPEGLPSVITTC) threads the bilayer. Ca(2+) is bound by residues Val319, Ala320, Ile322, and Glu324. Topologically, residues 334–800 (LALGTRKMAQ…ISSNVGEVIS (467 aa)) are lumenal. Catalysis depends on Asp366, which acts as the 4-aspartylphosphate intermediate. Mg(2+)-binding residues include Asp728 and Asp732. 2 residues coordinate Ca(2+): Asn794 and Glu797. A helical transmembrane segment spans residues 801-821 (IFLTAVLGIPECLIPVQLLWV). The Ca(2+) site is built by Asn822, Thr825, and Asp826. At 822–862 (NLVTDGPPATALGFNPADVDIMQKPPRKNTDALINSWVFFR) the chain is on the cytoplasmic side. A helical membrane pass occupies residues 863–883 (YMVIGSYVGIATVGIFIVWYT). At 884–944 (QASFLGINIV…CEYFTVGKVK (61 aa)) the chain is on the lumenal side. A helical transmembrane segment spans residues 945–965 (AMTLSLSVLVAIEMFNSLNAL). Glu957 contributes to the Ca(2+) binding site. The Cytoplasmic portion of the chain corresponds to 966 to 981 (SEDNSLIKMPPWRNPW). Residues 982–1002 (LLVAMSLSFALHSVILYVPFL) form a helical membrane-spanning segment. Residues 1003–1007 (ADIFG) are Lumenal-facing. The chain crosses the membrane as a helical span at residues 1008-1028 (IVPLSLYEWLLVILLSAPVIL). Over 1029–1048 (IDEVLKFVGRRRRRTKLKAA) the chain is Cytoplasmic.

This sequence belongs to the cation transport ATPase (P-type) (TC 3.A.3) family. Type IIA subfamily. 9-fold higher level in roots compared with leaves.

Its subcellular location is the endoplasmic reticulum membrane. It catalyses the reaction Ca(2+)(in) + ATP + H2O = Ca(2+)(out) + ADP + phosphate + H(+). This magnesium-dependent enzyme catalyzes the hydrolysis of ATP coupled with the translocation of calcium from the cytosol to an endomembrane compartment. The chain is Calcium-transporting ATPase, endoplasmic reticulum-type from Solanum lycopersicum (Tomato).